The primary structure comprises 481 residues: MQWEVVIGLEIHTQLATQSKIFSGSATTFGSEPNTQASLVDLGMPGVLPVLNEEAVRMACMFGLAIDAEIGKRNVFARKNYFYPDLPKGYQISQMDLPIVGKGHLDIALEDGTIKRIGVTRAHLEEDAGKSLHEDFSGSTGIDLNRAGTPLLEIVSEPDMRSAKEAVAYVKAIHALVRYLGICDGNMAEGSLRCDCNVSIRPKGQTEFGTRCEIKNVNSFRFIERAINSEIQRQIDLIEDGGKVVQETRLYDPNKDETRSMRSKEEANDYRYFPDPDLLPVVIEDSFLETIRAGLPELPPQKVERFQTQYGLSAYDANVLASSREQADYFEEVVKIGGDAKLAANWVMVELGSLLNKLGVEIDQAPVSAAQLGGMLLRIRDNTISGKIAKTVFEAMAAGEGDADSIIESKGLKQVTDTGAIDKMLDEMLAANAEQVEQYRAADEAKRGKMFGFFVGQAMKASKGKANPGQVNQLLKAKLEG.

The protein belongs to the GatB/GatE family. GatB subfamily. Heterotrimer of A, B and C subunits.

It catalyses the reaction L-glutamyl-tRNA(Gln) + L-glutamine + ATP + H2O = L-glutaminyl-tRNA(Gln) + L-glutamate + ADP + phosphate + H(+). The enzyme catalyses L-aspartyl-tRNA(Asn) + L-glutamine + ATP + H2O = L-asparaginyl-tRNA(Asn) + L-glutamate + ADP + phosphate + 2 H(+). Allows the formation of correctly charged Asn-tRNA(Asn) or Gln-tRNA(Gln) through the transamidation of misacylated Asp-tRNA(Asn) or Glu-tRNA(Gln) in organisms which lack either or both of asparaginyl-tRNA or glutaminyl-tRNA synthetases. The reaction takes place in the presence of glutamine and ATP through an activated phospho-Asp-tRNA(Asn) or phospho-Glu-tRNA(Gln). The protein is Aspartyl/glutamyl-tRNA(Asn/Gln) amidotransferase subunit B of Pseudomonas putida (strain ATCC 700007 / DSM 6899 / JCM 31910 / BCRC 17059 / LMG 24140 / F1).